Consider the following 251-residue polypeptide: MRKKKFLSRFSFSSLFLLCGTLLSACTGIQADLRNLIKETTGKDIDLSKAIKTKEGKKNIIASLKKSYEVNPKDTTKLLLDAWKQSFEEGKLGIADFDFDHVAYPQTNDPFTMERKVDHFQMTYQSFKDLLVEARLSYTFNWFGDYSSGDFTAKRGDKHYFYLFLKIKSDPKKQFSAKKFLTEGEAFTDQEGKQTTRNLEWIEFSASISWWTKGKDDVSQKSLKKFLESFATNTGYSSDINLFSYLEYLIK.

The signal sequence occupies residues 1–25 (MRKKKFLSRFSFSSLFLLCGTLLSA). The N-palmitoyl cysteine moiety is linked to residue cysteine 26. The S-diacylglycerol cysteine moiety is linked to residue cysteine 26.

This sequence belongs to the MG439/MG440 family.

Its subcellular location is the cell membrane. This is an uncharacterized protein from Mycoplasma pneumoniae (strain ATCC 29342 / M129 / Subtype 1) (Mycoplasmoides pneumoniae).